Reading from the N-terminus, the 158-residue chain is ATP synthase subunit beta, mitochondrial (158 aa).

This sequence belongs to the ATPase alpha/beta chains family. F-type ATPases have 2 components, CF(1) - the catalytic core - and CF(0) - the membrane proton channel. CF(1) has five subunits: alpha(3), beta(3), gamma(1), delta(1), epsilon(1). CF(0) has three main subunits: a, b and c.

It localises to the mitochondrion. It is found in the mitochondrion inner membrane. The catalysed reaction is ATP + H2O + 4 H(+)(in) = ADP + phosphate + 5 H(+)(out). Functionally, mitochondrial membrane ATP synthase (F(1)F(0) ATP synthase or Complex V) produces ATP from ADP in the presence of a proton gradient across the membrane which is generated by electron transport complexes of the respiratory chain. F-type ATPases consist of two structural domains, F(1) - containing the extramembraneous catalytic core, and F(0) - containing the membrane proton channel, linked together by a central stalk and a peripheral stalk. During catalysis, ATP synthesis in the catalytic domain of F(1) is coupled via a rotary mechanism of the central stalk subunits to proton translocation. Subunits alpha and beta form the catalytic core in F(1). Rotation of the central stalk against the surrounding alpha(3)beta(3) subunits leads to hydrolysis of ATP in three separate catalytic sites on the beta subunits. The protein is ATP synthase subunit beta, mitochondrial of Schizaphis graminum (Green bug aphid).